We begin with the raw amino-acid sequence, 167 residues long: NAD(P)H-quinone oxidoreductase subunit J (167 aa).

This sequence belongs to the complex I 30 kDa subunit family. As to quaternary structure, NDH-1 can be composed of about 15 different subunits; different subcomplexes with different compositions have been identified which probably have different functions.

The protein localises to the cellular thylakoid membrane. The enzyme catalyses a plastoquinone + NADH + (n+1) H(+)(in) = a plastoquinol + NAD(+) + n H(+)(out). It catalyses the reaction a plastoquinone + NADPH + (n+1) H(+)(in) = a plastoquinol + NADP(+) + n H(+)(out). Functionally, NDH-1 shuttles electrons from an unknown electron donor, via FMN and iron-sulfur (Fe-S) centers, to quinones in the respiratory and/or the photosynthetic chain. The immediate electron acceptor for the enzyme in this species is believed to be plastoquinone. Couples the redox reaction to proton translocation, and thus conserves the redox energy in a proton gradient. Cyanobacterial NDH-1 also plays a role in inorganic carbon-concentration. This is NAD(P)H-quinone oxidoreductase subunit J from Trichodesmium erythraeum (strain IMS101).